Consider the following 100-residue polypeptide: Replication restart protein PriB (100 aa).

The SSB domain occupies 1 to 99 (MGFNNLVSLA…LRIQNIQEYK (99 aa)).

The protein belongs to the PriB family. In terms of assembly, homodimer. Interacts with PriA and DnaT. Component of the replication restart primosome. Primosome assembly occurs via a 'hand-off' mechanism. PriA binds to replication forks, subsequently PriB then DnaT bind; DnaT then displaces ssDNA to generate the helicase loading substrate.

In terms of biological role, involved in the restart of stalled replication forks, which reloads the replicative helicase on sites other than the origin of replication; the PriA-PriB pathway is the major replication restart pathway. During primosome assembly it facilitates complex formation between PriA and DnaT on DNA; stabilizes PriA on DNA. Stimulates the DNA unwinding activity of PriA helicase. This is Replication restart protein PriB from Neisseria meningitidis serogroup B (strain ATCC BAA-335 / MC58).